The chain runs to 1196 residues: MGHFEKGQHALLNEGEENEMEIFGYRTQGCRKSLCLAGSIFSFGILPLVFYWRPAWHVWAHCVPCSLQEADTVLLRTTDEFQIYSWKKVIWIYLSALNSAFGLTPDHPLMTDEEYIINRAIRKPDLKVRCIKVQKIRYVWNYLEGQFQKIGSLEDWLSSAKIHQKFGSGLTREEQEIRRLICGPNTIDVEVTPIWKLLIKEVLNPFYIFQLFSVCLWFSEDYKEYAFAIIIMSIISISLTVYDLREQSVKLHHLVESHNSITVSVCGRKAGVQELESRVLVPGDLLILTGNKVLMPCDAVLIEGSCVVDEGMLTGESIPVTKTPLPKMDSSVPWKTQSEADYKRHVLFCGTEVIQAKAACSGTVRAVVLQTGFNTAKGDLVRSILYPKPVNFQLYRDAIRFLLCLVGTATIGMIYTLCVYVLSGEPPEEVVRKALDVITIAVPPALPAALTTGIIYAQRRLKKRGIFCISPQRINVCGQLNLVCFDKTGTLTRDGLDLWGVVSCDRNGFQEVHSFASGQALPWGPLCAAMASCHSLILLDGTIQGDPLDLKMFEATTWEMAFSGDDFHIKGVPAHAMVVKPCRTASQVPVEGIAILHQFPFSSALQRMTVIVQEMGGDRLAFMKGAPERVASFCQPETVPTSFVSELQIYTTQGFRVIALAYKKLENDHHATTLTRETVESDLIFLGLLILENRLKEETKPVLEELISARIRTVMITGDNLQTAITVARKSGMVSESQKVILIEANETTGSSSASISWTLVEEKKHIMYGNQDNYINIRDEVSDKGREGSYHFALTGKSFHVISQHFSSLLPKILINGTIFARMSPGQKSSLVEEFQKLDYFVGMCGDGANDCGALKMAHVGISLSEQEASVASPFTSKTPNIECVPHLIKEGRAALVTSFCMFKYMALYSMIQYVGVLLLYWETNSLSNYQFLFQDLAITTLIGVTMNLNGAYPKLVPFRPAGRLISPPLLLSVIFNILLSLAMHIAGFILVQRQPWYSVEIHSACTVQNESISELTMSPTAPEKMESNSTFTSFENTTVWFLGTINCITVALVFSKGKPFRQPTYTNYIFVLVLIIQLGVCLFILFADIPELYRRLDLLCTPVLWRASIVIMLSLNFIVSLVAEEAVIENRALWMMIKRCFGYQSKSQYRIWQRDLANDPSWPPLNQTSHSDMPECGRGVSYSNPVFESNEEQL.

Topologically, residues 1 to 31 (MGHFEKGQHALLNEGEENEMEIFGYRTQGCR) are cytoplasmic. Residues 32 to 52 (KSLCLAGSIFSFGILPLVFYW) lie within the membrane without spanning it. At 53-197 (RPAWHVWAHC…DVEVTPIWKL (145 aa)) the chain is on the cytoplasmic side. Residues 198-218 (LIKEVLNPFYIFQLFSVCLWF) traverse the membrane as a helical segment. Residues 219-223 (SEDYK) are Lumenal-facing. The helical transmembrane segment at 224–244 (EYAFAIIIMSIISISLTVYDL) threads the bilayer. Residues 245–400 (REQSVKLHHL…NFQLYRDAIR (156 aa)) lie on the Cytoplasmic side of the membrane. A helical transmembrane segment spans residues 401–421 (FLLCLVGTATIGMIYTLCVYV). The Lumenal segment spans residues 422 to 436 (LSGEPPEEVVRKALD). A helical transmembrane segment spans residues 437–457 (VITIAVPPALPAALTTGIIYA). The Cytoplasmic portion of the chain corresponds to 458–900 (QRRLKKRGIF…KEGRAALVTS (443 aa)). The 4-aspartylphosphate intermediate role is filled by Asp-486. Residues Asp-848 and Asp-852 each coordinate Mg(2+). A helical transmembrane segment spans residues 901–921 (FCMFKYMALYSMIQYVGVLLL). Topologically, residues 922 to 932 (YWETNSLSNYQ) are lumenal. Residues 933–953 (FLFQDLAITTLIGVTMNLNGA) traverse the membrane as a helical segment. Residues 954–972 (YPKLVPFRPAGRLISPPLL) lie on the Cytoplasmic side of the membrane. Residues 973-993 (LSVIFNILLSLAMHIAGFILV) form a helical membrane-spanning segment. Over 994 to 1035 (QRQPWYSVEIHSACTVQNESISELTMSPTAPEKMESNSTFTS) the chain is Lumenal. The chain crosses the membrane as a helical span at residues 1036 to 1056 (FENTTVWFLGTINCITVALVF). Residues 1057 to 1070 (SKGKPFRQPTYTNY) lie on the Cytoplasmic side of the membrane. A helical transmembrane segment spans residues 1071–1091 (IFVLVLIIQLGVCLFILFADI). The Lumenal portion of the chain corresponds to 1092–1109 (PELYRRLDLLCTPVLWRA). The helical transmembrane segment at 1110–1130 (SIVIMLSLNFIVSLVAEEAVI) threads the bilayer. The Cytoplasmic segment spans residues 1131 to 1196 (ENRALWMMIK…PVFESNEEQL (66 aa)).

The protein belongs to the cation transport ATPase (P-type) (TC 3.A.3) family. Type V subfamily. In terms of tissue distribution, expressed in heart, placenta, liver, skeletal muscles, and pancreas. Lower levels of expression are also detected in brain, lung and kidney. Weakly expressed in the adult brain. Expression in fetal brain is higher than in adult brain, with levels similar to several other fetal tissues including spleen and skeletal muscle. In adult brain expressed at low levels in all tissues examined, including the temporal lobe and putamen. Highly expressed in the respiratory and integumentary systems.

Its subcellular location is the early endosome membrane. The protein localises to the late endosome membrane. The protein resides in the recycling endosome membrane. The catalysed reaction is ATP + H2O = ADP + phosphate + H(+). The chain is Probable cation-transporting ATPase 13A4 (ATP13A4) from Homo sapiens (Human).